The chain runs to 189 residues: Elongation factor P (189 aa).

At Lys34 the chain carries N6-(3,6-diaminohexanoyl)-5-hydroxylysine.

Belongs to the elongation factor P family. Post-translationally, may be beta-lysylated on the epsilon-amino group of Lys-34 by the combined action of EpmA and EpmB, and then hydroxylated on the C5 position of the same residue by EpmC (if this protein is present). Lysylation is critical for the stimulatory effect of EF-P on peptide-bond formation. The lysylation moiety may extend toward the peptidyltransferase center and stabilize the terminal 3-CCA end of the tRNA. Hydroxylation of the C5 position on Lys-34 may allow additional potential stabilizing hydrogen-bond interactions with the P-tRNA.

The protein resides in the cytoplasm. Its pathway is protein biosynthesis; polypeptide chain elongation. In terms of biological role, involved in peptide bond synthesis. Alleviates ribosome stalling that occurs when 3 or more consecutive Pro residues or the sequence PPG is present in a protein, possibly by augmenting the peptidyl transferase activity of the ribosome. Modification of Lys-34 is required for alleviation. The protein is Elongation factor P of Francisella tularensis subsp. novicida (strain U112).